Here is a 94-residue protein sequence, read N- to C-terminus: Parvalbumin beta 4 (94 aa).

Position 1 is an N-acetylalanine (A1). 2 consecutive EF-hand domains span residues 36–63 (FFAI…FSAG) and 67–94 (LSDA…EFAA). Ca(2+) contacts are provided by D41, D43, S45, F47, E49, E52, D80, D82, D84, M86, and E91.

The protein belongs to the parvalbumin family.

In terms of biological role, in muscle, parvalbumin is thought to be involved in relaxation after contraction. It binds two calcium ions. The protein is Parvalbumin beta 4 of Merluccius bilinearis (Silver hake).